A 243-amino-acid polypeptide reads, in one-letter code: UPF0758 protein Cyan7425_1778 (243 aa).

An MPN domain is found at 112-235 (TIINDPAVAA…FRSLRQTTKL (124 aa)). Zn(2+) contacts are provided by His-184, His-186, and Asp-197. The JAMM motif motif lies at 184-197 (HNHPSGNVEPSPED).

Belongs to the UPF0758 family.

This Cyanothece sp. (strain PCC 7425 / ATCC 29141) protein is UPF0758 protein Cyan7425_1778.